Consider the following 146-residue polypeptide: Large ribosomal subunit protein uL15 (146 aa).

The span at 1–18 (MKLHELKPSEGSRKERNR) shows a compositional bias: basic and acidic residues. Residues 1 to 50 (MKLHELKPSEGSRKERNRVGRGTGSGNGKTSGRGHKGQKARSGGGVRLGF) are disordered. A compositionally biased stretch (gly residues) spans 21–31 (RGTGSGNGKTS).

It belongs to the universal ribosomal protein uL15 family. Part of the 50S ribosomal subunit.

Its function is as follows. Binds to the 23S rRNA. The polypeptide is Large ribosomal subunit protein uL15 (Listeria innocua serovar 6a (strain ATCC BAA-680 / CLIP 11262)).